The following is a 293-amino-acid chain: Formamidopyrimidine-DNA glycosylase (293 aa).

The active-site Schiff-base intermediate with DNA is the P2. The Proton donor role is filled by E3. The active-site Proton donor; for beta-elimination activity is the K58. Residues H104, R123, and K166 each coordinate DNA. The FPG-type zinc-finger motif lies at 257–293 (AAYDREGERCRTDGCGGAVKRFVQNGRSTFWCSGCQK). R283 (proton donor; for delta-elimination activity) is an active-site residue.

It belongs to the FPG family. As to quaternary structure, monomer. It depends on Zn(2+) as a cofactor.

The enzyme catalyses Hydrolysis of DNA containing ring-opened 7-methylguanine residues, releasing 2,6-diamino-4-hydroxy-5-(N-methyl)formamidopyrimidine.. It catalyses the reaction 2'-deoxyribonucleotide-(2'-deoxyribose 5'-phosphate)-2'-deoxyribonucleotide-DNA = a 3'-end 2'-deoxyribonucleotide-(2,3-dehydro-2,3-deoxyribose 5'-phosphate)-DNA + a 5'-end 5'-phospho-2'-deoxyribonucleoside-DNA + H(+). Its function is as follows. Involved in base excision repair of DNA damaged by oxidation or by mutagenic agents. Acts as a DNA glycosylase that recognizes and removes damaged bases. Has a preference for oxidized purines, such as 7,8-dihydro-8-oxoguanine (8-oxoG). Has AP (apurinic/apyrimidinic) lyase activity and introduces nicks in the DNA strand. Cleaves the DNA backbone by beta-delta elimination to generate a single-strand break at the site of the removed base with both 3'- and 5'-phosphates. In Rhodopseudomonas palustris (strain BisB5), this protein is Formamidopyrimidine-DNA glycosylase.